Consider the following 403-residue polypeptide: F-box only protein 22 (403 aa).

Met-1 carries the post-translational modification N-acetylmethionine. An F-box domain is found at 19–71; sequence STFVLSNLAEVVERVLTFLPAKALLRVACVCRLWRECVRRVLRTHRSVTWISA. At Ser-128 the chain carries Phosphoserine. An N6-acetyllysine modification is found at Lys-194.

As to quaternary structure, directly interacts with SKP1 and CUL1.

It localises to the cytoplasm. The protein localises to the myofibril. It is found in the sarcomere. The protein resides in the z line. Functionally, substrate-recognition component of the SCF (SKP1-CUL1-F-box protein)-type E3 ubiquitin ligase complex. Promotes the proteasome-dependent degradation of key sarcomeric proteins, such as alpha-actinin (ACTN2) and filamin-C (FLNC), essential for maintenance of normal contractile function. This chain is F-box only protein 22 (FBXO22), found in Pongo abelii (Sumatran orangutan).